Consider the following 33-residue polypeptide: Ferredoxin (33 aa).

In terms of domain architecture, 2Fe-2S ferredoxin-type spans 3–33; the sequence is KYKVRLLSEAEGIDVTIDSADDVYILDAAEE.

Belongs to the 2Fe2S plant-type ferredoxin family. The cofactor is [2Fe-2S] cluster.

Its subcellular location is the plastid. The protein resides in the chloroplast. In terms of biological role, ferredoxins are iron-sulfur proteins that transfer electrons in a wide variety of metabolic reactions. This Porphyridium aerugineum (Red microalga) protein is Ferredoxin.